The primary structure comprises 107 residues: Anaphase-promoting complex subunit 14 (107 aa).

In terms of assembly, the APC/C is composed of at least 13 subunits: apc1, apc2, nuc2, apc4, apc5, cut9, apc8, apc10, apc11, hcn1, apc13, apc14 and apc15.

The protein resides in the ascus epiplasm. Functionally, component of the anaphase promoting complex/cyclosome (APC/C), a cell cycle-regulated E3 ubiquitin-protein ligase complex that controls progression through mitosis and the G1 phase of the cell cycle. The APC/C is thought to confer substrate specificity and, in the presence of ubiquitin-conjugating E2 enzymes, it catalyzes the formation of protein-ubiquitin conjugates that are subsequently degraded by the 26S proteasome. Appears to play a role in spore wall formation. This chain is Anaphase-promoting complex subunit 14, found in Schizosaccharomyces pombe (strain 972 / ATCC 24843) (Fission yeast).